The sequence spans 284 residues: MPDYTWFEGIPFPAFGIPKETLQNVCNKFVVKEEDLILLTYPKSGTNWLIEIVCLIQTKGDPKWIQSVTIWDRSPWIETDLGYDMLIKKKGPRLITSHLPMHLFSKSLFSSKAKVIYLIRNPRDVLVSGYYFWGKTTLAKKPDSLGTYVEWFLKGYVPYGSWFEHIRAWLSMRELDNFLLLYYEDMKKDTMGTIKKICDFLGKKLEPDELDLVLKYSSFQVMKENNMSNYNLMEKELILPGFTFMRNGTTGDWKNHFTVAQAEAFDKVFQEKMAGFPPGMFPWD.

43–48 (KSGTNW) is a binding site for 3'-phosphoadenylyl sulfate. His98 (proton acceptor) is an active-site residue. 3'-phosphoadenylyl sulfate is bound by residues Arg120, Ser128, Tyr183, 217–222 (SSFQVM), and 246–248 (RNG).

The protein belongs to the sulfotransferase 1 family. In terms of assembly, oligomer. As to expression, liver, exhibiting a sex-dependent spatial localization in the lobule of the liver.

The protein resides in the cytoplasm. The protein localises to the cytosol. It catalyses the reaction an alcohol + 3'-phosphoadenylyl sulfate = an alkyl sulfate + adenosine 3',5'-bisphosphate + H(+). The enzyme catalyses glycolithocholate + 3'-phosphoadenylyl sulfate = sulfoglycolithocholate + adenosine 3',5'-bisphosphate + H(+). The catalysed reaction is taurolithocholate + 3'-phosphoadenylyl sulfate = taurolithocholate 3-sulfate + adenosine 3',5'-bisphosphate + H(+). It carries out the reaction 3beta-hydroxyandrost-5-en-17-one + 3'-phosphoadenylyl sulfate = dehydroepiandrosterone 3-sulfate + adenosine 3',5'-bisphosphate + H(+). It catalyses the reaction 3beta-hydroxy-5-cholenate + 3'-phosphoadenylyl sulfate = 3beta-sulfo-5-cholenate + adenosine 3',5'-bisphosphate + H(+). The enzyme catalyses deoxycholate + 3'-phosphoadenylyl sulfate = 3alpha-sulfodeoxycholate + adenosine 3',5'-bisphosphate + H(+). The catalysed reaction is glycodeoxycholate + 3'-phosphoadenylyl sulfate = 3alpha-sulfoglycodeoxycholate + adenosine 3',5'-bisphosphate + H(+). It carries out the reaction taurodeoxycholate + 3'-phosphoadenylyl sulfate = 3alpha-sulfotaurodeoxycholate + adenosine 3',5'-bisphosphate + H(+). Sulfotransferase that utilizes 3'-phospho-5'-adenylyl sulfate (PAPS) as sulfonate donor to catalyze the sulfonation of the hydroxyl group of hydroxysteroids and bile acids. Prefered substrates are dehydroepiandrosterone (DHEA, also known as 3beta-hydroxyandrost-5-en-17-one) and 3beta-hydroxy-5-cholenoate, but can also catalyze deoxycholate and its conjugates, and lithocholate conjugates, in vitro. This is Sulfotransferase 2A6 from Rattus norvegicus (Rat).